A 312-amino-acid polypeptide reads, in one-letter code: 3-methyl-2-oxobutanoate hydroxymethyltransferase (312 aa).

Belongs to the PanB family.

It carries out the reaction 3-methyl-2-oxobutanoate + (6R)-5,10-methylene-5,6,7,8-tetrahydrofolate + H2O = 2-dehydropantoate + (6S)-5,6,7,8-tetrahydrofolate. It participates in cofactor biosynthesis; (R)-pantothenate biosynthesis; (R)-pantoate from 3-methyl-2-oxobutanoate: step 1/2. Probable 3-methyl-2-oxobutanoate hydroxymethyltransferase required for pantothenic acid biosynthesis. Acts downstream in the pantothenic acid pathway. This is 3-methyl-2-oxobutanoate hydroxymethyltransferase from Saccharomyces cerevisiae (strain ATCC 204508 / S288c) (Baker's yeast).